We begin with the raw amino-acid sequence, 45 residues long: Myotoxin-2 (45 aa).

3 cysteine pairs are disulfide-bonded: Cys4–Cys36, Cys11–Cys30, and Cys18–Cys37.

This sequence belongs to the crotamine-myotoxin family. Monomer. Expressed by the venom gland.

It is found in the secreted. In terms of biological role, cationic peptide that possesses multiple functions. It acts as a cell-penetrating peptide (CPP), and as a potent voltage-gated potassium channel (Kv) inhibitor. It exhibits antimicrobial activities, hind limb paralysis, and severe muscle necrosis by a non-enzymatic mechanism. The sequence is that of Myotoxin-2 from Crotalus viridis viridis (Prairie rattlesnake).